Consider the following 140-residue polypeptide: MGARSTGREAALQMLFAVEAGGSSAPRVVATFWRETPGDPEGRAYADEVVVGVAEDLAAVDEAIRKASTNWRLERMARVDRNVLRLGAWELMNRPEVPRAVILDEAVELAKRYGSEESGAFVNGVLDRIAENLGRVDRDR.

Belongs to the NusB family.

In terms of biological role, involved in transcription antitermination. Required for transcription of ribosomal RNA (rRNA) genes. Binds specifically to the boxA antiterminator sequence of the ribosomal RNA (rrn) operons. In Sorangium cellulosum (strain So ce56) (Polyangium cellulosum (strain So ce56)), this protein is Transcription antitermination protein NusB.